Consider the following 261-residue polypeptide: Shikimate dehydrogenase (NADP(+)) (261 aa).

Residues 13–15 and T60 each bind shikimate; that span reads SLS. The active-site Proton acceptor is the K64. An NADP(+)-binding site is contributed by E76. Residues N85 and D100 each contribute to the shikimate site. Residues 122 to 126, 143 to 148, and I203 contribute to the NADP(+) site; these read GAGGA and NRTVER. Shikimate is bound at residue Y205. G226 is an NADP(+) binding site.

The protein belongs to the shikimate dehydrogenase family. In terms of assembly, homodimer.

The enzyme catalyses shikimate + NADP(+) = 3-dehydroshikimate + NADPH + H(+). Its pathway is metabolic intermediate biosynthesis; chorismate biosynthesis; chorismate from D-erythrose 4-phosphate and phosphoenolpyruvate: step 4/7. Functionally, involved in the biosynthesis of the chorismate, which leads to the biosynthesis of aromatic amino acids. Catalyzes the reversible NADPH linked reduction of 3-dehydroshikimate (DHSA) to yield shikimate (SA). The chain is Shikimate dehydrogenase (NADP(+)) from Exiguobacterium sp. (strain ATCC BAA-1283 / AT1b).